The sequence spans 330 residues: Probable integrase/recombinase protein MJ0367 (330 aa).

Residues 22–112 (IEETDKIKEY…LLKVFYRVLR (91 aa)) form the Core-binding (CB) domain. Residues 136–325 (QHYDAVDAEM…RAESLEFIKK (190 aa)) enclose the Tyr recombinase domain. Residues Arg177, Lys202, His275, Arg278, and His301 contribute to the active site. The O-(3'-phospho-DNA)-tyrosine intermediate role is filled by Tyr310.

Belongs to the 'phage' integrase family.

In Methanocaldococcus jannaschii (strain ATCC 43067 / DSM 2661 / JAL-1 / JCM 10045 / NBRC 100440) (Methanococcus jannaschii), this protein is Probable integrase/recombinase protein MJ0367.